Consider the following 349-residue polypeptide: Putative ABC transporter permease protein MJ0087 (349 aa).

9 helical membrane passes run 15–35, 69–89, 100–120, 135–155, 166–186, 206–226, 254–274, 295–315, and 318–338; these read IIFGIILLITLFLSSIYALCV, IFAAIISGMSLAVAGAVMQCI, MGISHGAMFGACFAIIMFGFG, MITIFAFLGALIGVVVILLLA, ILAGVAMSSLFTAGTMLIQYF, AIWTEIYIMAAVMIPSLIYFM, LIGMLVASLLTSVNVAFLGII, FLIPISALFGAVLLLIADTFA, and IIAPIVLPVGILTSFLGAPMF.

This sequence belongs to the binding-protein-dependent transport system permease family. FecCD subfamily.

Its subcellular location is the cell membrane. Probably part of a binding-protein-dependent transport system. Probably responsible for the translocation of the substrate across the membrane. The sequence is that of Putative ABC transporter permease protein MJ0087 from Methanocaldococcus jannaschii (strain ATCC 43067 / DSM 2661 / JAL-1 / JCM 10045 / NBRC 100440) (Methanococcus jannaschii).